We begin with the raw amino-acid sequence, 1188 residues long: Integrin alpha-11 (1188 aa).

Residues 1 to 22 (MDFPRGLLVAWTLSLWPGFTDT) form the signal peptide. The Extracellular portion of the chain corresponds to 23-1141 (FNMDTRNPRV…ISKQEDWQVP (1119 aa)). FG-GAP repeat units lie at residues 24-85 (NMDT…NCTK) and 91-151 (VTLS…FSKT). A disulfide bond links Cys-76 and Cys-83. 2 N-linked (GlcNAc...) asparagine glycosylation sites follow: Asn-82 and Asn-95. Intrachain disulfides connect Cys-121–Cys-139 and Cys-129–Cys-159. In terms of domain architecture, VWFA spans 164 to 345 (DIVIVLDGSN…AALKDIVDAL (182 aa)). Residues Asn-291, Asn-331, Asn-358, Asn-449, and Asn-462 are each glycosylated (N-linked (GlcNAc...) asparagine). FG-GAP repeat units lie at residues 355-406 (TNKN…VIPH), 411-461 (LKEF…SMHN), 462-527 (NRSL…RFVY), 528-586 (NGTL…NILK), and 590-650 (QRIT…FEPS). Residues Asp-488, Asn-490, Asp-492, and Asp-496 each contribute to the Ca(2+) site. N-linked (GlcNAc...) asparagine glycosylation is present at Asn-528. Asp-551, Asn-553, Asp-555, Asp-559, Asp-613, Asn-615, Asp-617, and Asp-621 together coordinate Ca(2+). Asn-642 is a glycosylation site (N-linked (GlcNAc...) asparagine). Cystine bridges form between Cys-659/Cys-668, Cys-674/Cys-729, and Cys-781/Cys-787. A glycan (N-linked (GlcNAc...) asparagine) is linked at Asn-694. A glycan (N-linked (GlcNAc...) asparagine) is linked at Asn-857. A disulfide bond links Cys-881 and Cys-893. N-linked (GlcNAc...) asparagine glycans are attached at residues Asn-894, Asn-973, Asn-1031, Asn-1039, and Asn-1059. Residues 1142–1164 (IWIIVGSTLGGLLLLALLVLALW) traverse the membrane as a helical segment. At 1165–1188 (KLGFFKSAKRKREPGLGPIPKELK) the chain is on the cytoplasmic side.

Belongs to the integrin alpha chain family. In terms of assembly, heterodimer of an alpha and a beta subunit. Alpha-11 associates with beta-1. Interacts with RAB21.

The protein localises to the membrane. Integrin alpha-11/beta-1 is a receptor for collagen. The protein is Integrin alpha-11 (Itga11) of Mus musculus (Mouse).